The following is a 243-amino-acid chain: Urease accessory protein UreF (243 aa).

The protein belongs to the UreF family. As to quaternary structure, ureD, UreF and UreG form a complex that acts as a GTP-hydrolysis-dependent molecular chaperone, activating the urease apoprotein by helping to assemble the nickel containing metallocenter of UreC. The UreE protein probably delivers the nickel.

Its subcellular location is the cytoplasm. Its function is as follows. Required for maturation of urease via the functional incorporation of the urease nickel metallocenter. This is Urease accessory protein UreF from Rhodopseudomonas palustris (strain BisB5).